The chain runs to 139 residues: Plasmid stability protein StbB (139 aa).

The 135-residue stretch at 2–136 (ILLDTNVISE…EAAGLNVINP (135 aa)) folds into the PINc domain. The Mg(2+) site is built by Asp-5 and Asp-104.

Belongs to the PINc/VapC protein family. It depends on Mg(2+) as a cofactor.

In terms of biological role, toxic component of a type II toxin-antitoxin (TA) system. An RNase. Involved in plasmid stability. This is Plasmid stability protein StbB (stbB) from Pseudomonas syringae pv. tomato (strain ATCC BAA-871 / DC3000).